The sequence spans 151 residues: Macrodomain Ter protein (151 aa).

Belongs to the MatP family. In terms of assembly, homodimer.

The protein localises to the cytoplasm. In terms of biological role, required for spatial organization of the terminus region of the chromosome (Ter macrodomain) during the cell cycle. Prevents early segregation of duplicated Ter macrodomains during cell division. Binds specifically to matS, which is a 13 bp signature motif repeated within the Ter macrodomain. The sequence is that of Macrodomain Ter protein from Photorhabdus laumondii subsp. laumondii (strain DSM 15139 / CIP 105565 / TT01) (Photorhabdus luminescens subsp. laumondii).